The primary structure comprises 100 residues: Aspartyl/glutamyl-tRNA(Asn/Gln) amidotransferase subunit C (100 aa).

This sequence belongs to the GatC family. In terms of assembly, heterotrimer of A, B and C subunits.

The catalysed reaction is L-glutamyl-tRNA(Gln) + L-glutamine + ATP + H2O = L-glutaminyl-tRNA(Gln) + L-glutamate + ADP + phosphate + H(+). It catalyses the reaction L-aspartyl-tRNA(Asn) + L-glutamine + ATP + H2O = L-asparaginyl-tRNA(Asn) + L-glutamate + ADP + phosphate + 2 H(+). Allows the formation of correctly charged Asn-tRNA(Asn) or Gln-tRNA(Gln) through the transamidation of misacylated Asp-tRNA(Asn) or Glu-tRNA(Gln) in organisms which lack either or both of asparaginyl-tRNA or glutaminyl-tRNA synthetases. The reaction takes place in the presence of glutamine and ATP through an activated phospho-Asp-tRNA(Asn) or phospho-Glu-tRNA(Gln). This chain is Aspartyl/glutamyl-tRNA(Asn/Gln) amidotransferase subunit C, found in Dictyoglomus turgidum (strain DSM 6724 / Z-1310).